A 354-amino-acid chain; its full sequence is Divinyl chlorophyll a/b light-harvesting protein PcbF (354 aa).

6 consecutive transmembrane segments (helical) span residues 27–47, 88–108, 140–160, 201–221, 248–268, and 315–335; these read FIAS…SNTL, VVTL…GGLL, FILG…VEWA, VMGG…FHAI, AILS…AFWC, and TANF…WHAL.

It belongs to the PsbB/PsbC family. IsiA/Pcb subfamily. The antenna complex consists of divinyl chlorophylls (a and b) and divinyl chlorophyll a/b binding proteins and binds more divinyl chlorophyll b than does the antenna complex from high-light-adapted Prochlorococcus. The cofactor is divinyl chlorophyll a. Divinyl chlorophyll b is required as a cofactor.

Its subcellular location is the cellular thylakoid membrane. Functionally, the antenna complex functions as a light receptor, it captures and delivers excitation energy to photosystems II and I. The Prochlorales pcb genes are not related to higher plant LHCs. The sequence is that of Divinyl chlorophyll a/b light-harvesting protein PcbF (pcbF) from Prochlorococcus marinus (strain SARG / CCMP1375 / SS120).